Reading from the N-terminus, the 571-residue chain is MGIKGLLGLLKPMQKSSHVEEFSGKTLGVDGYVWLHKAVFTCAHELAFNKETDKYLKYAIHQALMLQYYGVKPLIVFDGGPLPCKASTEQKRKERRQEAFELGKKLWDEGKKSQAIMQFSRCVDVTPEMAWKLIIALREHGIESIVAPYEADAQLVYLEKENIIDGIITEDSDMLVFGAQTVLFKMDGFGNCITIRRNDIANAQDLNLRLPIEKLRHMAIFSGCDYTDGVAGMGLKTALRYLQKYPEPRAAIRAMRLDKSLKVPVSFEKEFALADLAFRHQRVYCPKDKTLVHLSPPERELSVHEDAFIGSFFDNQLAIDIAEGRSNPITKCAFDIKDSSMQSFTKTTITISKRKGISKTDISNFFMKSIPPSKRPTKSTSLIDVTNVKVQRTHLANDISSEKQSIKSANEKAYVTPKSNSLKPGFGKSLSDISNSATKNENVPFLPPRTGVSKYFKLQKNTEKEIDEQVPSQSNNTTPTSAKSDSASPQNWFSSFSYQTPNSASPPFSSLSHTLPISALAKIGHDALNRKNHASLPSRRIVYKPPSSPSTPISMNPRPKGILSLQQYKFR.

The interval 1-96 (MGIKGLLGLL…STEQKRKERR (96 aa)) is N-domain. Asp-30, Asp-78, Glu-150, Asp-152, Asp-171, Asp-173, and Asp-225 together coordinate Mg(2+). The I-domain stretch occupies residues 114-245 (QAIMQFSRCV…KTALRYLQKY (132 aa)). 2 disordered regions span residues 464–489 (KEID…SASP) and 530–559 (RKNH…NPRP). Residues 470 to 489 (VPSQSNNTTPTSAKSDSASP) are compositionally biased toward polar residues.

The protein belongs to the XPG/RAD2 endonuclease family. EXO1 subfamily. In terms of assembly, monomer. Mg(2+) is required as a cofactor.

The protein localises to the nucleus. 5'-&gt;3' double-stranded DNA exonuclease that could act in a pathway that corrects mismatched base pairs. The protein is Exodeoxyribonuclease 1 (exo1) of Schizosaccharomyces pombe (strain 972 / ATCC 24843) (Fission yeast).